The sequence spans 80 residues: Exodeoxyribonuclease 7 small subunit (80 aa).

Belongs to the XseB family. Heterooligomer composed of large and small subunits.

It is found in the cytoplasm. It carries out the reaction Exonucleolytic cleavage in either 5'- to 3'- or 3'- to 5'-direction to yield nucleoside 5'-phosphates.. Bidirectionally degrades single-stranded DNA into large acid-insoluble oligonucleotides, which are then degraded further into small acid-soluble oligonucleotides. The polypeptide is Exodeoxyribonuclease 7 small subunit (Phenylobacterium zucineum (strain HLK1)).